The primary structure comprises 701 residues: Vacuolar protein sorting-associated protein 52 B (701 aa).

Coiled coils occupy residues 23–45 and 511–533; these read FEED…EECE and QLDI…LAKL.

Belongs to the VPS52 family. Component of the Golgi-associated retrograde protein (GARP) complex. As to expression, detected in pollen.

It is found in the golgi apparatus. The protein resides in the trans-Golgi network membrane. It localises to the endosome membrane. Its subcellular location is the golgi apparatus membrane. Functionally, may be involved in retrograde transport of early and late endosomes to the late Golgi. The chain is Vacuolar protein sorting-associated protein 52 B (P2) from Arabidopsis thaliana (Mouse-ear cress).